A 641-amino-acid polypeptide reads, in one-letter code: Threonine--tRNA ligase (641 aa).

The TGS domain maps to 1–61; it reads MPVITLPDGS…ENDTELAIVT (61 aa). Positions 242 to 533 are catalytic; sequence DHRKIGKKLG…LIEEYEGAFP (292 aa). Cys-333, His-384, and His-510 together coordinate Zn(2+).

Belongs to the class-II aminoacyl-tRNA synthetase family. Homodimer. Zn(2+) is required as a cofactor.

The protein resides in the cytoplasm. It carries out the reaction tRNA(Thr) + L-threonine + ATP = L-threonyl-tRNA(Thr) + AMP + diphosphate + H(+). Catalyzes the attachment of threonine to tRNA(Thr) in a two-step reaction: L-threonine is first activated by ATP to form Thr-AMP and then transferred to the acceptor end of tRNA(Thr). Also edits incorrectly charged L-seryl-tRNA(Thr). The chain is Threonine--tRNA ligase from Marinobacter nauticus (strain ATCC 700491 / DSM 11845 / VT8) (Marinobacter aquaeolei).